The following is a 1253-amino-acid chain: Cytoplasmic FMR1-interacting protein 1 (1253 aa).

At Ser-583 the chain carries Phosphoserine. A Phosphothreonine modification is found at Thr-1234.

The protein belongs to the CYFIP family. Component of the WAVE1 complex composed of ABI2, CYFIP1 or CYFIP2, BRK1, NCKAP1 and WASF1/WAVE1. Within the complex, a heterodimer containing NCKAP1 and CYFIP1 interacts with a heterotrimer formed by WAVE1, ABI2 and BRK1. Component of the CYFIP1-EIF4E-FMR1 complex which is composed of CYFIP, EIF4E and FMR1. Interacts with FMR1 but does not bind to related proteins FXR1 or FXR2. Interaction with EIF4E stimulates FMR1 binding. Component of the WAVE2 complex composed of ABI1, CYFIP1/SRA1, NCKAP1/NAP1 (NCKAP1l/HEM1 in hematopoietic cells) and WASF2/WAVE2. Interacts with the active GTP-bound form of RAC1. Interacts through its C-terminus with the C-terminus of DPYSL2/CRMP2 which is necessary for DPYSL2-induced axon outgrowth. Interacts with NYAP1, NYAP2 and MYO16. Interacts with TMEM108 (via N-terminus); the interaction associates TMEM108 with the WAVE1 complex.

It localises to the cytoplasm. Its subcellular location is the perinuclear region. It is found in the cell projection. The protein localises to the lamellipodium. The protein resides in the ruffle. It localises to the synapse. Its subcellular location is the synaptosome. In terms of biological role, component of the CYFIP1-EIF4E-FMR1 complex which binds to the mRNA cap and mediates translational repression. In the CYFIP1-EIF4E-FMR1 complex this subunit is an adapter between EIF4E and FMR1. Promotes the translation repression activity of FMR1 in brain probably by mediating its association with EIF4E and mRNA. Regulates formation of membrane ruffles and lamellipodia. Plays a role in axon outgrowth. Binds to F-actin but not to RNA. Part of the WAVE complex that regulates actin filament reorganization via its interaction with the Arp2/3 complex. Actin remodeling activity is regulated by RAC1. Regulator of epithelial morphogenesis. As component of the WAVE1 complex, required for BDNF-NTRK2 endocytic trafficking and signaling from early endosomes. May act as an invasion suppressor in cancers. The protein is Cytoplasmic FMR1-interacting protein 1 of Homo sapiens (Human).